A 1338-amino-acid polypeptide reads, in one-letter code: Terpene cyclase-glycosyl transferase fusion protein fsoA (1338 aa).

The interval 1–687 is terpenne cyclase; it reads MDMAPDELDE…RFLDRTDEPD (687 aa). 3 PFTB repeats span residues 19-61, 69-111, and 267-307; these read LEQA…PALN, AAAL…RLLG, and LRRC…SLEH. D412 acts as the Proton donor in catalysis. PFTB repeat units follow at residues 434–475, 515–556, and 564–615; these read VEMG…DSLV, AQKA…AFCG, and ALRA…LRFR. A glycosyltransferase region spans residues 688–1338; that stretch reads QDRDLPLLMT…NMLLGEGCQG (651 aa).

In the N-terminal section; belongs to the terpene cyclase/mutase family. It in the C-terminal section; belongs to the glycosyltransferase 28 family.

It catalyses the reaction (S)-2,3-epoxysqualene = isomotiol. It carries out the reaction isomotiol + UDP-alpha-D-glucose = 3-O-(beta-D-glucopyranosyl)-isomotiol + UDP + H(+). The catalysed reaction is 2alpha-hydroxyisomotiol + UDP-alpha-D-glucose = 3-O-(beta-D-glucopyranosyl)-2alpha-hydroxyisomotiol + UDP + H(+). Its pathway is secondary metabolite biosynthesis; terpenoid biosynthesis. Its function is as follows. Terpene cyclase-glycosyl transferase fusion protein; part of the gene cluster that mediates the biosynthesis of the enfumafungin-type antibiotic, fuscoatroside. Within the pathway, fsoA plays two important roles, the cyclization of 2,3(S)-oxidosqualene into isomotiol via its terpene cyclase (TC) domain and the C3 glycosylation of several intermediates via its glycosyltransferase (GT) domain. The fuscoatroside biosynthesis is initiated by the cyclization of 2,3(S)-oxidosqualene through FsoA's TC domain, leading to the formation of the fernane skeleton isomotiol, harboring a fernane triterpene skeleton with a C8-C9 double bond. Subsequently, C2-alpha-hydroxylation mediated by fsoD results in the production of 2-alpha-hydroxy-isomotiol, which is further acetylated by fsoF. The GT domain of FsoA may convert isomotiol, 2-alpha-hydroxy-isomotiol, and the acetylated derivative of 2-alpha-hydroxy-isomotiol into their corresponding glycosides 3-O-(beta-D-glucopyranosyl)-isomotiol, 3-O-(beta-D-glucopyranosyl)-2-alpha-hydroxy-isomotiol, and 3-O-(beta-D-glucopyranosyl)-2-alpha-acetoxy-isomotiol, which then undergo oxidative cleavage under the action of fsoE to form s 2-deacetoxy-fuscoatroside, 2-deacetyl-fuscoatroside, and fuscoatroside, respectively. Although hydroxylation followed by acetylation of 3-O-(beta-D-glucopyranosyl)-isomotiol and 2-deacetoxy-fuscoatroside by fsoD and fsoF could not be ruled out, this process is likely to occur with difficulty due to bulky steric hindrance caused by the presence of a glycan at C3 in these compounds. Interestingly, fsoE can also utilize the aglycones isomotiol and 2-alpha-hydroxy-isomotiol as substrates to generate 19-beta-hydroxy-isomotiol and 2-alpha,19-beta-dihydroxy-isomotiol, respectively. These reactions occur with lower efficiency. Finally, fsoE can further convert 2-alpha,19-beta-dihydroxy-isomotiol into 2-alpha-hydroxy-ismotiol-19-one and 2-alpha-hydroxy-ismotiol-19-one into 2-deacetyl-3-deglucopyranosyl-fuscoatroside. The chain is Terpene cyclase-glycosyl transferase fusion protein fsoA from Humicola fuscoatra.